Consider the following 161-residue polypeptide: Pro-corazonin (161 aa).

The N-terminal stretch at 1 to 20 (MMRLLLLPLFLFTLSMACMG) is a signal peptide. At Gln-21 the chain carries Pyrrolidone carboxylic acid. An Asparagine amide modification is found at Asn-31. Residues 70–161 (LERCLAQLQR…SGEPSVFGKH (92 aa)) constitute a propeptide that is removed on maturation. Disordered regions lie at residues 93–125 (NANR…TPIQ) and 142–161 (VAGS…FGKH). A compositionally biased stretch (low complexity) spans 102–117 (SDSGSSRNRANNNNEN).

This sequence belongs to the corazonin family.

It localises to the secreted. In terms of biological role, cardioactive peptide. Corazonin is probably involved in the physiological regulation of the heart beat. Clock (Clk) and cycle (cyc) proteins negatively regulate Crz transcription in a cell-specific manner. This Drosophila pseudoobscura pseudoobscura (Fruit fly) protein is Pro-corazonin.